The chain runs to 55 residues: MAKGGREKIKLESSAGTGHFYTTSKNKRTKPEKMELMKYDPTIRKHVAYKETKLK.

The span at 1-11 shows a compositional bias: basic and acidic residues; the sequence is MAKGGREKIKL. Positions 1–29 are disordered; the sequence is MAKGGREKIKLESSAGTGHFYTTSKNKRT. Over residues 14 to 24 the composition is skewed to polar residues; the sequence is SAGTGHFYTTS.

It belongs to the bacterial ribosomal protein bL33 family.

This Polynucleobacter asymbioticus (strain DSM 18221 / CIP 109841 / QLW-P1DMWA-1) (Polynucleobacter necessarius subsp. asymbioticus) protein is Large ribosomal subunit protein bL33.